A 227-amino-acid chain; its full sequence is Ribose-5-phosphate isomerase A (227 aa).

Substrate is bound by residues 30 to 33, 86 to 89, and 99 to 104; these read TGST, DGAD, and KGMGGA. Catalysis depends on E108, which acts as the Proton acceptor. Position 126 (K126) interacts with substrate.

This sequence belongs to the ribose 5-phosphate isomerase family. Homodimer.

The enzyme catalyses aldehydo-D-ribose 5-phosphate = D-ribulose 5-phosphate. The protein operates within carbohydrate degradation; pentose phosphate pathway; D-ribose 5-phosphate from D-ribulose 5-phosphate (non-oxidative stage): step 1/1. In terms of biological role, involved in the first step of the non-oxidative branch of the pentose phosphate pathway. It catalyzes the reversible conversion of ribose-5-phosphate to ribulose 5-phosphate. Can also act on D-ribose-5-diphosphate and D-ribose-5-triphosphate as substrate. This Thermus thermophilus (strain ATCC BAA-163 / DSM 7039 / HB27) protein is Ribose-5-phosphate isomerase A.